We begin with the raw amino-acid sequence, 59 residues long: uncharacterized protein (59 aa).

This is an uncharacterized protein from Rickettsia conorii (strain ATCC VR-613 / Malish 7).